The chain runs to 768 residues: Putative calcium up-regulated protein H (768 aa).

Residues 1–22 form a disordered region; it reads MINIEDISKSSNQSEEKQLKST. 2 Ricin B-type lectin domains span residues 25-145 and 116-248; these read KPKY…WTTF and QGNG…WGIN.

It belongs to the cup family.

It localises to the cytoplasm. Its subcellular location is the membrane. In terms of biological role, may play an important role in stabilizing and/or regulating the cell membrane during Ca(2+) stress or certain stages of development. In Dictyostelium discoideum (Social amoeba), this protein is Putative calcium up-regulated protein H (cupH).